We begin with the raw amino-acid sequence, 77 residues long: Sec-independent protein translocase protein TatA (77 aa).

A helical membrane pass occupies residues 1–21 (MGSFSIWHWLVVGILVLLLFG). Positions 41 to 77 (KGMSEDDAPTPAPKQIDAQRAPDLSATPTPTAETENR) are disordered. A compositionally biased stretch (polar residues) spans 66-77 (ATPTPTAETENR).

Belongs to the TatA/E family. In terms of assembly, the Tat system comprises two distinct complexes: a TatABC complex, containing multiple copies of TatA, TatB and TatC subunits, and a separate TatA complex, containing only TatA subunits. Substrates initially bind to the TatABC complex, which probably triggers association of the separate TatA complex to form the active translocon.

Its subcellular location is the cell inner membrane. In terms of biological role, part of the twin-arginine translocation (Tat) system that transports large folded proteins containing a characteristic twin-arginine motif in their signal peptide across membranes. TatA could form the protein-conducting channel of the Tat system. The chain is Sec-independent protein translocase protein TatA from Sphingopyxis alaskensis (strain DSM 13593 / LMG 18877 / RB2256) (Sphingomonas alaskensis).